The following is a 211-amino-acid chain: Bcl-2 homologous antagonist/killer (211 aa).

The interval 1-28 is disordered; it reads MASGQGPGPPRQECGEPALPSASEEQVA. Alanine 2 is modified (N-acetylalanine). Positions 74–88 match the BH3 motif; sequence VGRQLAIIGDDINRR. The BH1 signature appears at 117–136; that stretch reads SLFESGINWGRVVALLGFGY. Aspartate 160 and histidine 164 together coordinate Zn(2+). Residues 169-184 carry the BH2 motif; it reads RWIAQRGGWVAALNLG. A helical transmembrane segment spans residues 188 to 205; sequence ILNVLVVLGVVLLGQFVV.

The protein belongs to the Bcl-2 family. In terms of assembly, homodimer. Formation of the homodimer is zinc-dependent. Forms heterodimers with BCL2 and BCL2L1 isoform Bcl-X(L). Forms heterooligomers with BAX. Interacts with BCL2A1. Interacts with RTL10/BOP. Interacts with VDAC1. Interacts with GIMAP3/IAN4 and GIMAP5/IAN5. (Microbial infection) Interacts with vaccinia virus protein F1. As to quaternary structure, (Microbial infection) Interacts with myxoma virus protein M11L. In terms of assembly, (Microbial infection) Interacts with Epstein-Barr virus protein BALF1. (Microbial infection) Interacts with adenovirus protein E1B 19K. In terms of tissue distribution, expressed in a wide variety of tissues, with highest levels in the heart and skeletal muscle.

It is found in the mitochondrion outer membrane. Plays a role in the mitochondrial apoptotic process. Upon arrival of cell death signals, promotes mitochondrial outer membrane (MOM) permeabilization by oligomerizing to form pores within the MOM. This releases apoptogenic factors into the cytosol, including cytochrome c, promoting the activation of caspase 9 which in turn processes and activates the effector caspases. The protein is Bcl-2 homologous antagonist/killer (BAK1) of Homo sapiens (Human).